Here is a 129-residue protein sequence, read N- to C-terminus: Phosphoribosyl-AMP cyclohydrolase (129 aa).

Residue Asp76 coordinates Mg(2+). Cys77 is a binding site for Zn(2+). Residues Asp78 and Asp80 each contribute to the Mg(2+) site. Residues Cys97 and Cys104 each coordinate Zn(2+).

Belongs to the PRA-CH family. In terms of assembly, homodimer. Mg(2+) serves as cofactor. The cofactor is Zn(2+).

Its subcellular location is the cytoplasm. It catalyses the reaction 1-(5-phospho-beta-D-ribosyl)-5'-AMP + H2O = 1-(5-phospho-beta-D-ribosyl)-5-[(5-phospho-beta-D-ribosylamino)methylideneamino]imidazole-4-carboxamide. The protein operates within amino-acid biosynthesis; L-histidine biosynthesis; L-histidine from 5-phospho-alpha-D-ribose 1-diphosphate: step 3/9. Catalyzes the hydrolysis of the adenine ring of phosphoribosyl-AMP. This Polaromonas sp. (strain JS666 / ATCC BAA-500) protein is Phosphoribosyl-AMP cyclohydrolase.